A 966-amino-acid polypeptide reads, in one-letter code: Calsyntenin-2 (966 aa).

The N-terminal stretch at 1–20 is a signal peptide; sequence MLPGRLCLVPLLLALGVGSG. Residues 21-835 are Extracellular-facing; sequence GGSGDGGDSR…SIQRSSVVPS (815 aa). 2 Cadherin domains span residues 46–162 and 163–282; these read IETS…APTF and KEPA…MPLF. N58 and N100 each carry an N-linked (GlcNAc...) asparagine glycan. Residues N344, N376, N720, and N733 are each glycosylated (N-linked (GlcNAc...) asparagine). A helical membrane pass occupies residues 836 to 856; sequence IATVVIIISVCMLVFVVAMGV. Over 857-966 the chain is Cytoplasmic; that stretch reads YRVRIAHQHF…NTAGVINIWK (110 aa). The disordered stretch occupies residues 890–966; sequence NPMEKHEGPG…NTAGVINIWK (77 aa). The span at 901 to 916 shows a compositional bias: acidic residues; it reads GEDETTEVEEEEEAEE. Polar residues predominate over residues 943 to 960; the sequence is QSGTSSQSPERSTWNTAG.

It belongs to the calsyntenin family. Post-translationally, proteolytically processed under normal cellular conditions. A primary zeta-cleavage generates a large extracellular (soluble) N-terminal domain (sAlc) and a short C-terminal transmembrane fragment (CTF1). A secondary cleavage catalyzed by gamma-secretase within the transmembrane domain releases the beta-Alc-gamma chain in the extracellular milieu and produces an intracellular fragment (AlcICD). This processing is strongly suppressed in the tripartite complex formed with APBA2 and APP, which seems to prevent the association with PSEN1. In terms of tissue distribution, restricted to the brain. In the cerebral cortex, found in the somas and neuropil of all layers. Expressed at highest levels in neurons of cortical layers 5 and 6 and, at lower levels, in neurons of the upper layers. Highly expressed in Purkinje cells. Also found in a few scattered interneurons throughout the granule cell layer and occasionally in neurons in the molecular layer (at protein level). Present throughout all cortical layers, highest levels in GABAergic neurons (based on morphology and distribution pattern).

The protein localises to the postsynaptic cell membrane. It is found in the endoplasmic reticulum membrane. The protein resides in the golgi apparatus membrane. Its subcellular location is the cell projection. It localises to the dendrite. Its function is as follows. Postsynaptic adhesion molecule that binds to presynaptic neurexins to mediate synapse formation, and which is involved in learning and memory. Promotes synapse development by acting as a cell adhesion molecule at the postsynaptic membrane, which associates with neurexin-alpha at the presynaptic membrane. The sequence is that of Calsyntenin-2 from Mus musculus (Mouse).